The sequence spans 104 residues: Large ribosomal subunit protein cL38 (104 aa).

The N-terminal 39 residues, 1–39, are a transit peptide targeting the chloroplast; it reads MASVSSIFGCGVSMAPNSSLRNKAIRTERRSACGGLLIE. The disordered stretch occupies residues 42–76; that stretch reads SRPQKKSTAHHMKTRPRKSRLSDRNRKPTVYAPLP. Over residues 44 to 60 the composition is skewed to basic residues; it reads PQKKSTAHHMKTRPRKS.

The protein belongs to the chloroplast-specific ribosomal protein cL38 family. Part of the 50S ribosomal subunit.

It localises to the plastid. The protein localises to the chloroplast. The polypeptide is Large ribosomal subunit protein cL38 (PSRP6) (Pisum sativum (Garden pea)).